The following is a 432-amino-acid chain: Queuine tRNA-ribosyltransferase accessory subunit 2 (432 aa).

Cys-329, Cys-331, Cys-334, and His-360 together coordinate Zn(2+). The disordered stretch occupies residues 390 to 432 (GQKSLPPYEPPKEEKLPMPAAQKAELMEPMEDLGEKQNKKQRA). Over residues 422–432 (LGEKQNKKQRA) the composition is skewed to basic and acidic residues.

The protein belongs to the queuine tRNA-ribosyltransferase family. QTRT2 subfamily. Heterodimer of a catalytic subunit and an accessory subunit. Requires Zn(2+) as cofactor.

It localises to the cytoplasm. Functionally, non-catalytic subunit of the queuine tRNA-ribosyltransferase (TGT) that catalyzes the base-exchange of a guanine (G) residue with queuine (Q) at position 34 (anticodon wobble position) in tRNAs with GU(N) anticodons (tRNA-Asp, -Asn, -His and -Tyr), resulting in the hypermodified nucleoside queuosine (7-(((4,5-cis-dihydroxy-2-cyclopenten-1-yl)amino)methyl)-7-deazaguanosine). This is Queuine tRNA-ribosyltransferase accessory subunit 2 from Anopheles gambiae (African malaria mosquito).